A 375-amino-acid polypeptide reads, in one-letter code: Alanine racemase (375 aa).

The active-site Proton acceptor; specific for D-alanine is Lys-40. Residue Lys-40 is modified to N6-(pyridoxal phosphate)lysine. A substrate-binding site is contributed by Arg-140. Tyr-268 functions as the Proton acceptor; specific for L-alanine in the catalytic mechanism. Met-315 provides a ligand contact to substrate.

It belongs to the alanine racemase family. Pyridoxal 5'-phosphate serves as cofactor.

It catalyses the reaction L-alanine = D-alanine. It participates in amino-acid biosynthesis; D-alanine biosynthesis; D-alanine from L-alanine: step 1/1. In terms of biological role, catalyzes the interconversion of L-alanine and D-alanine. May also act on other amino acids. The chain is Alanine racemase (alr) from Limosilactobacillus reuteri (strain DSM 20016) (Lactobacillus reuteri).